Here is a 103-residue protein sequence, read N- to C-terminus: Phospholipase A2 large subunit (103 aa).

Ca(2+) contacts are provided by Trp7, Gly9, and Gly11. Cystine bridges form between Cys8–Cys30, Cys29–Cys68, Cys36–Cys61, and Cys59–Cys96. N-linked (GlcNAc...) asparagine glycosylation is present at Asn16. The active site involves His33. Asp34 lines the Ca(2+) pocket.

Belongs to the phospholipase A2 family. Group III subfamily. In terms of assembly, heterodimer composed of a large subunit and a small subunit; disulfide-linked. The cofactor is Ca(2+). In terms of tissue distribution, expressed by the venom gland.

It is found in the secreted. It carries out the reaction a 1,2-diacyl-sn-glycero-3-phosphocholine + H2O = a 1-acyl-sn-glycero-3-phosphocholine + a fatty acid + H(+). In terms of biological role, phospholipase toxin, which catalyzes the calcium-dependent hydrolysis of the 2-acyl groups in 3-sn-phosphoglycerides. Inhibits both skeletal (RYR1) and cardiac (RYR2) ryanodine receptors (calcium release channels). Probably blocks ryanodine receptors by generating a lipid product. The chain is Phospholipase A2 large subunit from Chersonesometrus fulvipes (Indian black scorpion).